The sequence spans 236 residues: uncharacterized protein (236 aa).

Belongs to the RHS family.

This is an uncharacterized protein from Escherichia coli (strain K12).